Reading from the N-terminus, the 221-residue chain is Epididymal secretory glutathione peroxidase (221 aa).

A signal peptide spans Met-1–Thr-21. The active site involves Cys-73.

Belongs to the glutathione peroxidase family. Epididymis.

It localises to the secreted. The enzyme catalyses 2 glutathione + H2O2 = glutathione disulfide + 2 H2O. Functionally, protects cells and enzymes from oxidative damage, by catalyzing the reduction of hydrogen peroxide, lipid peroxides and organic hydroperoxide, by glutathione. May constitute a glutathione peroxidase-like protective system against peroxide damage in sperm membrane lipids. This is Epididymal secretory glutathione peroxidase (GPX5) from Canis lupus familiaris (Dog).